The following is a 246-amino-acid chain: MPAKLSVNLNAIAMLRNRRDLPWPSVTGLGRAALAAGAAGLTVHPRPDQRHIRFSDLGDIRALIDDEYPQAEFNIEGFPSEAFLDLVEKHEPEQVTLVPDDPMQATSDHGWDFMSKADFLAPIVARLKGRGMRVSLFADPDSLGYERAKAIGADHVELYTGPYGATHDDPAAAARELDRLEKAARAATALGLAVNAGHDLTVDNLPALVKRIPQLAEVSIGHGLTADALMYGIPVTVSRYITALAG.

3-amino-2-oxopropyl phosphate contacts are provided by Asn8 and Arg19. The active-site Proton acceptor is the His44. 1-deoxy-D-xylulose 5-phosphate is bound by residues Arg46 and His51. The active-site Proton acceptor is Glu76. A 1-deoxy-D-xylulose 5-phosphate-binding site is contributed by Thr106. Catalysis depends on His198, which acts as the Proton donor. Residues Asp199 and 221-222 (GH) each bind 3-amino-2-oxopropyl phosphate.

The protein belongs to the PNP synthase family. In terms of assembly, homooctamer; tetramer of dimers.

The protein localises to the cytoplasm. The catalysed reaction is 3-amino-2-oxopropyl phosphate + 1-deoxy-D-xylulose 5-phosphate = pyridoxine 5'-phosphate + phosphate + 2 H2O + H(+). It participates in cofactor biosynthesis; pyridoxine 5'-phosphate biosynthesis; pyridoxine 5'-phosphate from D-erythrose 4-phosphate: step 5/5. Functionally, catalyzes the complicated ring closure reaction between the two acyclic compounds 1-deoxy-D-xylulose-5-phosphate (DXP) and 3-amino-2-oxopropyl phosphate (1-amino-acetone-3-phosphate or AAP) to form pyridoxine 5'-phosphate (PNP) and inorganic phosphate. The chain is Pyridoxine 5'-phosphate synthase from Brucella suis (strain ATCC 23445 / NCTC 10510).